Here is a 512-residue protein sequence, read N- to C-terminus: Apolipoprotein N-acyltransferase (512 aa).

6 helical membrane passes run Leu5–Ala25, Phe56–Ile76, Val92–Leu112, Leu118–Ala138, Phe168–Ala188, and Ser195–Ala215. The CN hydrolase domain occupies Leu233–Gly477. Glu271 serves as the catalytic Proton acceptor. Residue Lys337 is part of the active site. The Nucleophile role is filled by Cys389. A helical transmembrane segment spans residues Thr487–Phe507.

It belongs to the CN hydrolase family. Apolipoprotein N-acyltransferase subfamily.

Its subcellular location is the cell inner membrane. It carries out the reaction N-terminal S-1,2-diacyl-sn-glyceryl-L-cysteinyl-[lipoprotein] + a glycerophospholipid = N-acyl-S-1,2-diacyl-sn-glyceryl-L-cysteinyl-[lipoprotein] + a 2-acyl-sn-glycero-3-phospholipid + H(+). It functions in the pathway protein modification; lipoprotein biosynthesis (N-acyl transfer). Functionally, catalyzes the phospholipid dependent N-acylation of the N-terminal cysteine of apolipoprotein, the last step in lipoprotein maturation. This is Apolipoprotein N-acyltransferase from Neisseria meningitidis serogroup A / serotype 4A (strain DSM 15465 / Z2491).